The following is a 220-amino-acid chain: PKHD-type hydroxylase sync_1544 (220 aa).

Positions 79–173 (KLHRFLISKT…RTVCVGWIES (95 aa)) constitute a Fe2OG dioxygenase domain. The Fe cation site is built by H97, D99, and H154. R164 is a binding site for 2-oxoglutarate.

It depends on Fe(2+) as a cofactor. L-ascorbate is required as a cofactor.

This is PKHD-type hydroxylase sync_1544 from Synechococcus sp. (strain CC9311).